Reading from the N-terminus, the 224-residue chain is Virulence transcriptional regulatory protein PhoP (224 aa).

The 115-residue stretch at 3-117 folds into the Response regulatory domain; sequence RVLVVEDNAL…EVMARMQALM (115 aa). At Asp-52 the chain carries 4-aspartylphosphate. A DNA-binding region (ompR/PhoB-type) is located at residues 125–223; that stretch reads SQVINIPPFQ…VRGQGYLFEL (99 aa).

In terms of assembly, monomer in the inactive, unphosphorylated state and dimer in the active, phosphorylated state. Post-translationally, phosphorylated by PhoQ.

It localises to the cytoplasm. Its function is as follows. Member of the two-component regulatory system PhoP/PhoQ which regulates the expression of genes involved in virulence, adaptation to acidic and low Mg(2+) environments and resistance to host defense antimicrobial peptides. Essential for intramacrophage survival of S.typhimurium. In low periplasmic Mg(2+), PhoQ phosphorylates PhoP, resulting in the expression of PhoP-activated genes (PAG) and repression of PhoP-repressed genes (PRG). In high periplasmic Mg(2+), PhoQ dephosphorylates phospho-PhoP, resulting in the repression of PAG and may lead to expression of some PRG. Essential for transcription of spiC inside macrophages by controlling the expression of the two-component regulatory system SsrB/SpiR (SsrA) and Pir at transcriptional and post-transcriptional levels respectively. Promotes expression of the two-component regulatory system PmrA/PmrB via activation of pmrD gene. Is required to attenuate bacterial growth within fibroblast cells and to enhance bacterial resistance to bile in intestinal cells. Negatively regulates prgH, which is required for invasion of epithelial cells. PhoP uses multiple mechanisms to promote transcription and activates promoters for PAG at low (uM range) Mg(2+) concentrations. Involved in acid tolerance. This chain is Virulence transcriptional regulatory protein PhoP (phoP), found in Salmonella typhimurium (strain SL1344).